The chain runs to 214 residues: 14-3-3 protein homolog 2 (214 aa).

It belongs to the 14-3-3 family.

This is 14-3-3 protein homolog 2 from Schistosoma mansoni (Blood fluke).